The following is a 170-amino-acid chain: Probable chemoreceptor glutamine deamidase CheD 3 (170 aa).

It belongs to the CheD family.

The enzyme catalyses L-glutaminyl-[protein] + H2O = L-glutamyl-[protein] + NH4(+). Probably deamidates glutamine residues to glutamate on methyl-accepting chemotaxis receptors (MCPs), playing an important role in chemotaxis. The sequence is that of Probable chemoreceptor glutamine deamidase CheD 3 from Dechloromonas aromatica (strain RCB).